A 622-amino-acid polypeptide reads, in one-letter code: Probable ATP-citrate synthase (622 aa).

ATP is bound by residues A228–G248 and F279–A305. E245 is a Mg(2+) binding site. H287 (tele-phosphohistidine intermediate) is an active-site residue. L306 to S316 provides a ligand contact to CoA.

The protein in the N-terminal section; belongs to the succinate/malate CoA ligase beta subunit family. In the C-terminal section; belongs to the succinate/malate CoA ligase alpha subunit family. As to quaternary structure, homotetramer.

The protein resides in the cytoplasm. It catalyses the reaction oxaloacetate + acetyl-CoA + ADP + phosphate = citrate + ATP + CoA. Catalyzes the cleavage of citrate into oxaloacetate and acetyl-CoA, the latter serving as common substrate in multiple biochemical reactions in protein, carbohydrate and lipid metabolism. This is Probable ATP-citrate synthase (acly) from Dictyostelium discoideum (Social amoeba).